Reading from the N-terminus, the 210-residue chain is Putative odorant-binding protein A5 (210 aa).

Residues 1–19 (MKLPALHLLFLGFICLARS) form the signal peptide.

Belongs to the phosphatidylethanolamine-binding protein family. Cells at the bases of a few scattered sensilla on the posterior surface of the antenna.

The protein localises to the secreted. The chain is Putative odorant-binding protein A5 (a5) from Drosophila melanogaster (Fruit fly).